Here is an 850-residue protein sequence, read N- to C-terminus: Protein monoglycylase TTLL8 (850 aa).

2 disordered regions span residues 1-29 and 228-254; these read MEPE…QGIS and RSSR…DAEN. Residues 222-580 form the TTL domain; the sequence is SHQSCSRSSR…DRSCDIGNFE (359 aa). ATP-binding positions include lysine 354, 360–361, 392–395, 405–407, and 449–450; these read RG, QKYI, KFD, and CN. Arginine 360 is a binding site for a protein. The Mg(2+) site is built by aspartate 527, glutamate 540, and asparagine 542. Glutamate 540 contacts ATP. Residues 627-652 are disordered; that stretch reads AQPLKARGPSAMPDPAQGPPSPALQR.

Mg(2+) is required as a cofactor.

Its subcellular location is the cytoplasm. It localises to the cytoskeleton. The protein resides in the cell projection. The protein localises to the cilium. It is found in the cilium axoneme. Its subcellular location is the flagellum axoneme. It carries out the reaction L-glutamyl-[protein] + glycine + ATP = glycyl-L-glutamyl-[protein] + ADP + phosphate + H(+). Its function is as follows. Monoglycylase which modifies both tubulin and non-tubulin proteins, adding a single glycine to the gamma-carboxyl groups of specific glutamate residues to generate monoglycine side chains within the C-terminal tail of target proteins. Not involved in elongation step of the polyglycylation reaction. Preferentially monoglycylates alpha-tubulin over beta-tubulin. Together with TTLL3, mediates microtubule glycylation of primary and motile cilia, which is essential for their stability and maintenance. Together with TTLL3, glycylates sperm flagella which regulates axonemal dynein motor activity, thereby controlling flagellar beat, directional sperm swimming and male fertility. Monoglycylates non-tubulin proteins such as ANP32A, ANP32B, SET, NCL and NAP1. The chain is Protein monoglycylase TTLL8 from Homo sapiens (Human).